The chain runs to 562 residues: Efflux pump apf11 (562 aa).

Low complexity-rich tracts occupy residues 1–10 (MGDISAATKA) and 18–30 (TPETNTTSSSSDT). The interval 1–36 (MGDISAATKAPAPPTPATPETNTTSSSSDTDVQHEP) is disordered. Asn22 carries an N-linked (GlcNAc...) asparagine glycan. Helical transmembrane passes span 46-66 (LVIFALGLAILVGVLDATIVA), 83-103 (AWYGSAYLLVTGATQPIFGKI), 110-130 (KLVFLSSVAILEVGSLVCALA), 141-161 (AIAGLGAAGVISGGLIITALT), 169-189 (VYTAILGSLEGVGVIIGPIIG), 200-220 (WCFWINLPIGAVLCAILVFCL), 249-269 (GGLAIAGSITCLLLALEWGGT), and 278-298 (IIVLLVVFGVSLICVAVHQHW). An N-linked (GlcNAc...) asparagine glycan is attached at Asn312. 6 helical membrane-spanning segments follow: residues 317-337 (MFLLCGLCFAGAQFTVLYYLP), 356-376 (LAMVVSVIVVSVIAGGSAGAV), 382-404 (FVFFATIFSSIGAGMLYTLHPSI), 414-434 (ILFGAGSGTGIQQAIVGVQVA), 447-467 (VMLVNTLAGSIFIAVSQTLFL), and 516-536 (FLIGLVLCSITVLTWPLIRWI).

The protein belongs to the major facilitator superfamily. TCR/Tet family.

It localises to the membrane. It participates in secondary metabolite biosynthesis. Functionally, efflux pump; part of the gene cluster that mediates the biosynthesis of the cyclic tetrapeptide apicidin F (APF). The protein is Efflux pump apf11 (apf11) of Gibberella fujikuroi (strain CBS 195.34 / IMI 58289 / NRRL A-6831) (Bakanae and foot rot disease fungus).